Consider the following 546-residue polypeptide: T-complex protein 1 subunit epsilon (546 aa).

The protein belongs to the TCP-1 chaperonin family. Heterooligomeric complex of about 850 to 900 kDa that forms two stacked rings, 12 to 16 nm in diameter.

It localises to the cytoplasm. In terms of biological role, molecular chaperone; assists the folding of proteins upon ATP hydrolysis. Known to play a role, in vitro, in the folding of actin and tubulin. The polypeptide is T-complex protein 1 subunit epsilon (cct5) (Schizosaccharomyces pombe (strain 972 / ATCC 24843) (Fission yeast)).